A 420-amino-acid polypeptide reads, in one-letter code: Gamma-glutamyl phosphate reductase (420 aa).

This sequence belongs to the gamma-glutamyl phosphate reductase family.

It is found in the cytoplasm. The catalysed reaction is L-glutamate 5-semialdehyde + phosphate + NADP(+) = L-glutamyl 5-phosphate + NADPH + H(+). It participates in amino-acid biosynthesis; L-proline biosynthesis; L-glutamate 5-semialdehyde from L-glutamate: step 2/2. Its function is as follows. Catalyzes the NADPH-dependent reduction of L-glutamate 5-phosphate into L-glutamate 5-semialdehyde and phosphate. The product spontaneously undergoes cyclization to form 1-pyrroline-5-carboxylate. The polypeptide is Gamma-glutamyl phosphate reductase (Neisseria meningitidis serogroup C (strain 053442)).